The following is a 1036-amino-acid chain: Protein translocase subunit SecA, chloroplastic (1036 aa).

The N-terminal 76 residues, 1-76 (MESCARSASQ…KIGELMQVRA (76 aa)), are a transit peptide targeting the chloroplast. 186 to 193 (MRTGEGKT) contacts ATP. The tract at residues 995–1036 (NQEQQQKGKPDSSNVENKRIGDANLNPVSVTESPSSDSPQNT) is disordered. A compositionally biased stretch (basic and acidic residues) spans 1000–1015 (QKGKPDSSNVENKRIG). Residues 1020 to 1036 (NPVSVTESPSSDSPQNT) show a composition bias toward polar residues.

This sequence belongs to the SecA family.

Its subcellular location is the plastid. The protein resides in the chloroplast stroma. It localises to the chloroplast thylakoid membrane. It carries out the reaction ATP + H2O + chloroplast-proteinSide 1 = ADP + phosphate + chloroplast-proteinSide 2.. Its function is as follows. Has a central role in coupling the hydrolysis of ATP to the transfer of proteins across the thylakoid membrane. In Spinacia oleracea (Spinach), this protein is Protein translocase subunit SecA, chloroplastic.